The chain runs to 124 residues: Acidic phospholipase A2 (124 aa).

7 disulfide bridges follow: Cys26-Cys116, Cys28-Cys44, Cys43-Cys95, Cys49-Cys124, Cys50-Cys88, Cys57-Cys81, and Cys75-Cys86. Residues Tyr27, Gly29, and Gly31 each contribute to the Ca(2+) site. His47 is an active-site residue. Position 48 (Asp48) interacts with Ca(2+). Residue Asp89 is part of the active site.

This sequence belongs to the phospholipase A2 family. Group II subfamily. D49 sub-subfamily. Monomer. The cofactor is Ca(2+). As to expression, expressed by the venom gland.

The protein resides in the secreted. It carries out the reaction a 1,2-diacyl-sn-glycero-3-phosphocholine + H2O = a 1-acyl-sn-glycero-3-phosphocholine + a fatty acid + H(+). Functionally, snake venom phospholipase A2 (PLA2) that acts in vivo as an anti-thrombotic agent. Inhibits platelet aggregation induced by ADP, arachidonic acid, and thrombin. PLA2 catalyzes the calcium-dependent hydrolysis of the 2-acyl groups in 3-sn-phosphoglycerides. In Gloydius halys (Chinese water mocassin), this protein is Acidic phospholipase A2.